Here is a 514-residue protein sequence, read N- to C-terminus: Bifunctional purine biosynthesis protein PurH (514 aa).

The region spanning 1-145 (MIKRALISVS…KNYQDVVVIV (145 aa)) is the MGS-like domain.

It belongs to the PurH family.

It carries out the reaction (6R)-10-formyltetrahydrofolate + 5-amino-1-(5-phospho-beta-D-ribosyl)imidazole-4-carboxamide = 5-formamido-1-(5-phospho-D-ribosyl)imidazole-4-carboxamide + (6S)-5,6,7,8-tetrahydrofolate. It catalyses the reaction IMP + H2O = 5-formamido-1-(5-phospho-D-ribosyl)imidazole-4-carboxamide. It participates in purine metabolism; IMP biosynthesis via de novo pathway; 5-formamido-1-(5-phospho-D-ribosyl)imidazole-4-carboxamide from 5-amino-1-(5-phospho-D-ribosyl)imidazole-4-carboxamide (10-formyl THF route): step 1/1. It functions in the pathway purine metabolism; IMP biosynthesis via de novo pathway; IMP from 5-formamido-1-(5-phospho-D-ribosyl)imidazole-4-carboxamide: step 1/1. The sequence is that of Bifunctional purine biosynthesis protein PurH from Acetivibrio thermocellus (strain ATCC 27405 / DSM 1237 / JCM 9322 / NBRC 103400 / NCIMB 10682 / NRRL B-4536 / VPI 7372) (Clostridium thermocellum).